We begin with the raw amino-acid sequence, 232 residues long: MAAKLTKKRKTLAEKVQRDKTYPLSEAIKLIKECAKAKFNESIDVAINLGIDSRKSDQAIRGATVLPHGSGRTVKVAVFAQGDNVEKAKAAGADIVGLDDLAERIQGGDIDFDVVIATPETMRVVGKLGQVLGPRGLMPNPKVGTVTTDVASAVKNAKQGQVRYRTDKNGIIHCTIGKVNFEEKALEENFLALLNDIKKAKPSAAKGTYLKKLTLSSTMGPGIAIDRTTVGA.

This sequence belongs to the universal ribosomal protein uL1 family. As to quaternary structure, part of the 50S ribosomal subunit.

Its function is as follows. Binds directly to 23S rRNA. The L1 stalk is quite mobile in the ribosome, and is involved in E site tRNA release. In terms of biological role, protein L1 is also a translational repressor protein, it controls the translation of the L11 operon by binding to its mRNA. The polypeptide is Large ribosomal subunit protein uL1 (Coxiella burnetii (strain RSA 331 / Henzerling II)).